A 333-amino-acid polypeptide reads, in one-letter code: Flap endonuclease 1 (333 aa).

The N-domain stretch occupies residues 1-99; that stretch reads MGVALREVLT…ETIESRREVR (99 aa). 7 residues coordinate Mg(2+): aspartate 28, aspartate 81, glutamate 153, glutamate 155, aspartate 174, aspartate 176, and aspartate 235. The segment at 117 to 256 is I-domain; it reads EAYKQARASS…TALKIVKKDG (140 aa). The interval 325–333 is interaction with PCNA; that stretch reads GQKTLDRWF.

Belongs to the XPG/RAD2 endonuclease family. FEN1 subfamily. In terms of assembly, interacts with PCNA. PCNA stimulates the nuclease activity without altering cleavage specificity. Mg(2+) is required as a cofactor.

Structure-specific nuclease with 5'-flap endonuclease and 5'-3' exonuclease activities involved in DNA replication and repair. During DNA replication, cleaves the 5'-overhanging flap structure that is generated by displacement synthesis when DNA polymerase encounters the 5'-end of a downstream Okazaki fragment. Binds the unpaired 3'-DNA end and kinks the DNA to facilitate 5' cleavage specificity. Cleaves one nucleotide into the double-stranded DNA from the junction in flap DNA, leaving a nick for ligation. Also involved in the base excision repair (BER) pathway. Acts as a genome stabilization factor that prevents flaps from equilibrating into structures that lead to duplications and deletions. Also possesses 5'-3' exonuclease activity on nicked or gapped double-stranded DNA. The protein is Flap endonuclease 1 of Methanosphaerula palustris (strain ATCC BAA-1556 / DSM 19958 / E1-9c).